The primary structure comprises 701 residues: Glycine--tRNA ligase beta subunit (701 aa).

It belongs to the class-II aminoacyl-tRNA synthetase family. Tetramer of two alpha and two beta subunits.

The protein resides in the cytoplasm. The enzyme catalyses tRNA(Gly) + glycine + ATP = glycyl-tRNA(Gly) + AMP + diphosphate. The chain is Glycine--tRNA ligase beta subunit from Helicobacter pylori (strain G27).